The primary structure comprises 398 residues: Acetate kinase (398 aa).

Mg(2+) is bound at residue asparagine 7. ATP is bound at residue lysine 14. Arginine 91 is a substrate binding site. Residue aspartate 148 is the Proton donor/acceptor of the active site. ATP contacts are provided by residues 208–212 (HLGNG), 283–285 (DFR), and 331–335 (GIGEH). Residue glutamate 386 coordinates Mg(2+).

This sequence belongs to the acetokinase family. Homodimer. Mg(2+) serves as cofactor. Requires Mn(2+) as cofactor.

Its subcellular location is the cytoplasm. The catalysed reaction is acetate + ATP = acetyl phosphate + ADP. It functions in the pathway metabolic intermediate biosynthesis; acetyl-CoA biosynthesis; acetyl-CoA from acetate: step 1/2. Functionally, catalyzes the formation of acetyl phosphate from acetate and ATP. Can also catalyze the reverse reaction. This Clostridium botulinum (strain Eklund 17B / Type B) protein is Acetate kinase.